Consider the following 178-residue polypeptide: Peptide methionine sulfoxide reductase MsrA (178 aa).

The active site involves cysteine 14.

It belongs to the MsrA Met sulfoxide reductase family.

It catalyses the reaction L-methionyl-[protein] + [thioredoxin]-disulfide + H2O = L-methionyl-(S)-S-oxide-[protein] + [thioredoxin]-dithiol. The enzyme catalyses [thioredoxin]-disulfide + L-methionine + H2O = L-methionine (S)-S-oxide + [thioredoxin]-dithiol. Has an important function as a repair enzyme for proteins that have been inactivated by oxidation. Catalyzes the reversible oxidation-reduction of methionine sulfoxide in proteins to methionine. The sequence is that of Peptide methionine sulfoxide reductase MsrA from Bacillus pumilus (strain SAFR-032).